We begin with the raw amino-acid sequence, 68 residues long: MLYPSIDELTEKAESKYILVTVASKRARQLRENSEVQVVRPKSKKFVGLALEEFISDELVHEFLDGRK.

It belongs to the RNA polymerase subunit omega family. In terms of assembly, the RNAP catalytic core consists of 2 alpha, 1 beta, 1 beta' and 1 omega subunit. When a sigma factor is associated with the core the holoenzyme is formed, which can initiate transcription.

The enzyme catalyses RNA(n) + a ribonucleoside 5'-triphosphate = RNA(n+1) + diphosphate. In terms of biological role, promotes RNA polymerase assembly. Latches the N- and C-terminal regions of the beta' subunit thereby facilitating its interaction with the beta and alpha subunits. The polypeptide is DNA-directed RNA polymerase subunit omega (Brevibacillus brevis (strain 47 / JCM 6285 / NBRC 100599)).